A 260-amino-acid chain; its full sequence is MEIPDVTMTINSTNASADTASLDATLAGLDLAGRLSFVAGLGGRAVFTTSLGIEDQVITAAIGTHRLPIDVVTLETGRLFKETVDLIDETEERFGIEIRRFRPEQDDIDAYAAKYGLNGFYESVEARHACCHVRKLIPLGKALEGAAFWITGLRRGQSGNRAATPFAEFDAERNLIKINALADWDIEQIRAYVAEENIPVNPLHQRGYPSIGCEPCTRAIKPGEPERAGRWWWENDEKRECGLHVAGAEQTPPVSAIPQR.

[4Fe-4S] cluster-binding residues include cysteine 130, cysteine 131, cysteine 213, and cysteine 216. Catalysis depends on cysteine 241, which acts as the Nucleophile; cysteine thiosulfonate intermediate.

This sequence belongs to the PAPS reductase family. CysH subfamily. The cofactor is [4Fe-4S] cluster.

Its subcellular location is the cytoplasm. It catalyses the reaction [thioredoxin]-disulfide + sulfite + AMP + 2 H(+) = adenosine 5'-phosphosulfate + [thioredoxin]-dithiol. It functions in the pathway sulfur metabolism; hydrogen sulfide biosynthesis; sulfite from sulfate. In terms of biological role, catalyzes the formation of sulfite from adenosine 5'-phosphosulfate (APS) using thioredoxin as an electron donor. This chain is Adenosine 5'-phosphosulfate reductase, found in Agrobacterium fabrum (strain C58 / ATCC 33970) (Agrobacterium tumefaciens (strain C58)).